Reading from the N-terminus, the 494-residue chain is Alpha-amylase-related protein (494 aa).

A signal peptide spans 1–20 (MFKFTFALALCVLAAGLVLA). Glutamine 21 carries the post-translational modification Pyrrolidone carboxylic acid. Cysteine 48 and cysteine 104 are oxidised to a cystine. Positions 118, 169, and 178 each coordinate Ca(2+). Cysteines 157 and 171 form a disulfide. A chloride-binding site is contributed by arginine 206. Aspartate 208 acts as the Nucleophile in catalysis. Histidine 212 is a Ca(2+) binding site. The Proton donor role is filled by glutamate 245. Positions 308 and 343 each coordinate chloride. Intrachain disulfides connect cysteine 376–cysteine 382, cysteine 418–cysteine 441, and cysteine 448–cysteine 460.

The protein belongs to the glycosyl hydrolase 13 family. In terms of assembly, monomer. Requires Ca(2+) as cofactor. Chloride is required as a cofactor.

Its subcellular location is the secreted. The enzyme catalyses Endohydrolysis of (1-&gt;4)-alpha-D-glucosidic linkages in polysaccharides containing three or more (1-&gt;4)-alpha-linked D-glucose units.. This chain is Alpha-amylase-related protein (Amyrel), found in Drosophila pseudoobscura pseudoobscura (Fruit fly).